The following is a 131-amino-acid chain: Two-component response regulator ORR3 (131 aa).

Positions 12–129 (HVLAVDDSIV…DVSRLCNRVI (118 aa)) constitute a Response regulatory domain. Asp62 is subject to 4-aspartylphosphate.

Belongs to the ARR family. Type-A subfamily. Post-translationally, two-component system major event consists of a His-to-Asp phosphorelay between a sensor histidine kinase (HK) and a response regulator (RR). In plants, the His-to-Asp phosphorelay involves an additional intermediate named Histidine-containing phosphotransfer protein (HPt). This multistep phosphorelay consists of a His-Asp-His-Asp sequential transfer of a phosphate group between first a His and an Asp of the HK protein, followed by the transfer to a conserved His of the HPt protein and finally the transfer to an Asp in the receiver domain of the RR protein. Expressed in roots, mature leaves and flowers, and at low levels in shoots.

Functions as a response regulator involved in His-to-Asp phosphorelay signal transduction system. Phosphorylation of the Asp residue in the receiver domain activates the ability of the protein to promote the transcription of target genes. Type-A response regulators seem to act as negative regulators of the cytokinin signaling. The chain is Two-component response regulator ORR3 from Oryza sativa subsp. indica (Rice).